The sequence spans 617 residues: Melatonin-related receptor (617 aa).

Residues 1–30 are Extracellular-facing; the sequence is MGPTLAVPTPYGCIGCKLPQPEYPPALIIF. Residues 31–51 form a helical membrane-spanning segment; sequence MFCAMVITIVVDLIGNSMVIL. Over 52-64 the chain is Cytoplasmic; that stretch reads AVTKNKKLRNSGN. The helical transmembrane segment at 65–85 threads the bilayer; that stretch reads IFVVSLSVADMLVAIYPYPLM. Topologically, residues 86-103 are extracellular; sequence LHAMSIGGWDLSQLQCQM. An intrachain disulfide couples cysteine 101 to cysteine 178. Residues 104–124 form a helical membrane-spanning segment; that stretch reads VGFITGLSVVGSIFNIVAIAI. Over 125–143 the chain is Cytoplasmic; that stretch reads NRYCYICHSLQYERIFSVR. The helical transmembrane segment at 144–164 threads the bilayer; sequence NTCIYLVITWIMTVLAVLPNM. Residues 165-188 lie on the Extracellular side of the membrane; it reads YIGTIEYDPRTYTCIFNYLNNPVF. Residues 189 to 209 traverse the membrane as a helical segment; it reads TVTIVCIHFVLPLLIVGFCYV. The Cytoplasmic portion of the chain corresponds to 210–239; the sequence is RIWTKVLAARDPAGQNPDNQLAEVRNFLTM. A helical transmembrane segment spans residues 240 to 260; sequence FVIFLLFAVCWCPINVLTVLV. Over 261–273 the chain is Extracellular; that stretch reads AVSPKEMAGKIPN. The helical transmembrane segment at 274–294 threads the bilayer; that stretch reads WLYLAAYFIAYFNSCLNAVIY. Residues 295–617 lie on the Cytoplasmic side of the membrane; sequence GLLNENFRRE…VEDDPDEMAV (323 aa). 2 disordered regions span residues 340 to 438 and 464 to 596; these read AHAR…ATVY and SVHF…VTTS. Residues 341–353 show a composition bias toward basic and acidic residues; sequence HARDQAREQDRAH. Positions 485 to 500 are enriched in polar residues; sequence GSHSKSAFSAATSHPK.

This sequence belongs to the G-protein coupled receptor 1 family. Homodimer, and heterodimer with MTNR1A and MTNR1B. Interacts with KAT5. Interacts with RTN4 isoform A/NOGO-A. Interacts with TGFBR1. As to quaternary structure, interacts with GTF2I. Post-translationally, cleaved by CAPN1 in a calcium-dependent manner. As to expression, hypothalamus and pituitary.

Its subcellular location is the cell membrane. The protein localises to the postsynaptic density. It is found in the nucleus. G protein-coupled receptor that plays a role in numerous physiological processes including regulation of energy metabolism, neurite outgrowth or cell migration. Promotes self-renewal and neuronal differentiation of neural progenitor cells through activation of the NOTCH and WNT/beta-catenin signaling pathways. Modulates the KAT5-dependent glucocorticoid receptor signaling by modulating KAT5 subcellular compartmentalisation. Also plays a role in the activation TGFBR1 in the absence of TGFBR2 by interfering with FKBP1A binding to TGFBR1, leading to induction of both canonical and non-canonical SMAD signaling pathways resulting in inhibition of proliferation or promotion of migration. Its function is as follows. Upon cleavage by CAPN1, functions as a scaffold in the nucleus for interacting partners such as GTF2I to promote FOS promoter activation. The protein is Melatonin-related receptor (GPR50) of Homo sapiens (Human).